The primary structure comprises 645 residues: Dictomallein-like protein (645 aa).

Positions 1–13 (MKLSMVMVLLVLA) are cleaved as a signal peptide. The disordered stretch occupies residues 19-55 (CGGNDDNNSERTHESGDSNGDVTTPDNDASSNDEDDA). The 272-residue stretch at 177–448 (PALHPELDLT…QRWVRNRARM (272 aa)) folds into the Peptidase M66 domain. H333 is a binding site for Zn(2+). E334 is an active-site residue. Positions 337 and 343 each coordinate Zn(2+).

It belongs to the dictomallein family. Zn(2+) is required as a cofactor.

The protein resides in the secreted. This Hahella chejuensis (strain KCTC 2396) protein is Dictomallein-like protein (dtmL).